We begin with the raw amino-acid sequence, 322 residues long: MTALQPYTIPSQDDRQSVLADKIKRLREERNAIILAHYYTVPEIQQVADVVGDSLALARAAETTDADVIVFAGVYFMGETAKILNPGKTVLMPDNSAGCPLADSCPADRFRSFREQYPDALVISYINSTAEIKAESDIICTSSNAVDIVSQIPSDKRIIFGPDRNLGSYVMQQLEREMILWQGFCYVHESYSWDVIETAVRQFPDAQLIAHPECRREVLDHADFVGSTGALLAYSQKSPADAFIVATEPGILYEMKKRSPEKSFIAAPKDIVSSQSVCSQMKQNTMENLCNCLETMAPQIVVDETLAAGALKSIRKMLEMSK.

The iminosuccinate site is built by H37 and S54. Residue C99 coordinates [4Fe-4S] cluster. Residues 125-127 (YIN) and S142 contribute to the iminosuccinate site. Position 185 (C185) interacts with [4Fe-4S] cluster. Iminosuccinate-binding positions include 211–213 (HPE) and T228. C278 serves as a coordination point for [4Fe-4S] cluster.

Belongs to the quinolinate synthase family. Type 2 subfamily. [4Fe-4S] cluster is required as a cofactor.

It is found in the cytoplasm. It carries out the reaction iminosuccinate + dihydroxyacetone phosphate = quinolinate + phosphate + 2 H2O + H(+). The protein operates within cofactor biosynthesis; NAD(+) biosynthesis; quinolinate from iminoaspartate: step 1/1. Its function is as follows. Catalyzes the condensation of iminoaspartate with dihydroxyacetone phosphate to form quinolinate. This chain is Quinolinate synthase, found in Prosthecochloris aestuarii (strain DSM 271 / SK 413).